The primary structure comprises 943 residues: Glutamate receptor ionotropic, NMDA 1 (943 aa).

The signal sequence occupies residues 1-20 (MSTMRLLTLALLFSCSFARA). Residues 21–580 (ACDPKIVNIG…TLDSFMQPFQ (560 aa)) are Extracellular-facing. Residues N61, N224, N260, N297, N321, N371, N389, N461, N492, and N512 are each glycosylated (N-linked (GlcNAc...) asparagine). Residues C79 and C329 are joined by a disulfide bond. 2 disulfides stabilise this stretch: C441–C475 and C457–C476. Residues P537, T539, and R544 each contribute to the glycine site. Residues 581–601 (STLWLLVGLSVHVVAVMLYLL) form a helical membrane-spanning segment. Over 602–623 (DRFSPFGRFKVNSEEEEEDALT) the chain is Cytoplasmic. The discontinuously helical intramembrane region spans 624-645 (LSSAMWFSWGVLLNSGIGEGAP). Residues 624–645 (LSSAMWFSWGVLLNSGIGEGAP) form a pore-forming region. Topologically, residues 646–651 (RSFSAR) are cytoplasmic. Residues 652 to 668 (ILGMVWAGFAMIIVASY) traverse the membrane as a helical segment. The Extracellular segment spans residues 669–833 (TANLAAFLVL…NAPATLTFEN (165 aa)). N-linked (GlcNAc...) asparagine glycosylation occurs at N695. Glycine contacts are provided by S709 and D753. An intrachain disulfide couples C765 to C819. N792 carries N-linked (GlcNAc...) asparagine glycosylation. The helical transmembrane segment at 834-854 (MAGVFMLVAGGIVAGIFLIFI) threads the bilayer. Over 855-943 (EIAYKRHKDA…LSDPSVSTVV (89 aa)) the chain is Cytoplasmic. Phosphoserine occurs at positions 910, 911, 917, and 918.

The protein belongs to the glutamate-gated ion channel (TC 1.A.10.1) family. NR1/GRIN1 subfamily. As to quaternary structure, heterotetramer; the NMDAR subunits are modular and harbor tiered domains that function in concert to regulate opening and closing of the cation-selective ion channel pore. Forms heterotetrameric channels composed of two GluN1/zeta subunits (GRIN1), and two identical GluN2/epsilon subunits (GRIN2A, GRIN2B, GRIN2C or GRIN2D) or GluN3 subunits (GRIN3A or GRIN3B) (in vitro). Can also form heterotetrameric channels that contain at least two GluN1 subunits and at least two different GluN2 subunits (or a combination of one GluN2 and one GluN3 subunits) (in vitro). In vivo, the subunit composition may vary in function of the expression levels of the different subunits. Found in a complex with GRIN2A or GRIN2B, GRIN3A and PPP2CB. Found in a complex with GRIN2A or GRIN2B and GRIN3B. Interacts with SNX27 (via PDZ domain); the interaction is required for recycling to the plasma membrane when endocytosed and prevent degradation in lysosomes. Interacts with DLG4 and MPDZ. Interacts with LRFN1 and LRFN2. Interacts with MYZAP. Found in a complex with DLG4 and PRR7. Found in a complex with GRIN2B and PRR7. Interacts with PRR7; the interaction is reduced following NMDA receptor activity. NMDA is probably regulated by C-terminal phosphorylation of an isoform of GRIN1 by PKC. Dephosphorylated on Ser-897 probably by protein phosphatase 2A (PPP2CB). Its phosphorylated state is influenced by the formation of the NMDAR-PPP2CB complex and the NMDAR channel activity.

The protein localises to the cell membrane. The protein resides in the postsynaptic cell membrane. It localises to the postsynaptic density membrane. Its subcellular location is the synaptic cell membrane. It catalyses the reaction Ca(2+)(in) = Ca(2+)(out). It carries out the reaction Na(+)(in) = Na(+)(out). The catalysed reaction is K(+)(in) = K(+)(out). Functionally, component of N-methyl-D-aspartate (NMDA) receptors (NMDARs) that function as heterotetrameric, ligand-gated cation channels with high calcium permeability and voltage-dependent block by Mg(2+). NMDARs participate in synaptic plasticity for learning and memory formation by contributing to the long-term potentiation (LTP). Channel activation requires binding of the neurotransmitter L-glutamate to the GluN2 subunit, glycine or D-serine binding to the GluN1 subunit, plus membrane depolarization to eliminate channel inhibition by Mg(2+). NMDARs mediate simultaneously the potasium efflux and the influx of calcium and sodium. Each GluN2 or GluN3 subunit confers differential attributes to channel properties, including activation, deactivation and desensitization kinetics, pH sensitivity, Ca2(+) permeability, and binding to allosteric modulators. The GluN3 subunits confer distinctive ion channel activation mechanism, which relies exclusively on glycine and does not involve glutamate. In Canis lupus familiaris (Dog), this protein is Glutamate receptor ionotropic, NMDA 1.